A 161-amino-acid chain; its full sequence is V-type proton ATPase 16 kDa proteolipid subunit c 2 (161 aa).

The Lumenal segment spans residues 1-15 (MSYDLETAERAAYAP). A helical membrane pass occupies residues 16 to 36 (FFGYMGAASAQIFTVLGAAYG). At 37–58 (TAKSAVGICSMGVMRPELIMKS) the chain is on the cytoplasmic side. Residues 59 to 79 (VIPVIMAGIIGIYGLVVAMVL) traverse the membrane as a helical segment. Residues 80–98 (KGKVTSASAGYDLNKGFAH) are Lumenal-facing. Residues 99 to 119 (LAAGLTCGLCGLGAGYAIGIV) traverse the membrane as a helical segment. The Cytoplasmic portion of the chain corresponds to 120-137 (GDAGVRGTAQQPRLFVGM). The chain crosses the membrane as a helical span at residues 138–158 (ILILIFSEVLGLYGMIVALIL). At 159–161 (GTS) the chain is on the lumenal side.

This sequence belongs to the V-ATPase proteolipid subunit family. In terms of assembly, V-ATPase is a heteromultimeric enzyme made up of two complexes: the ATP-hydrolytic V1 complex and the proton translocation V0 complex. The V1 complex consists of three catalytic AB heterodimers that form a heterohexamer, three peripheral stalks each consisting of EG heterodimers, one central rotor including subunits D and F, and the regulatory subunits C and H. The proton translocation complex V0 consists of the proton transport subunit a, a ring of proteolipid subunits c9c'', rotary subunit d, subunits e and f, and the accessory subunits vah-19/Ac45 and vah-20/PRR. As to expression, expressed in the H-shaped excretory cell, rectum, and a pair of cells posterior to the anus.

It localises to the membrane. Functionally, proton-conducting pore forming subunit of the V0 complex of vacuolar(H+)-ATPase (V-ATPase), a multisubunit enzyme composed of a peripheral complex (V1) that hydrolyzes ATP and a membrane integral complex (V0) that translocates protons. V-ATPase is responsible for acidifying and maintaining the pH of intracellular compartments and in some cell types, is targeted to the plasma membrane, where it is responsible for acidifying the extracellular environment. Involved in necrotic cell death. Required along with other vacuolar ATPase components for the removal of protein aggregates which form in immature oocytes in the distal gonad. This removal occurs as the oocytes mature and move to the proximal gonad, is triggered by the introduction of sperm through mating and occurs before fertilization. The introduction of sperm triggers V-ATPase accumulation in proximal oocytes and induces lysosomal acidification which leads to engulfing of protein aggregates by lysosomes and subsequent clearance of the aggregates. Lysosomal acidification also leads to changes in mitochondrial morphology and function. Mitochondria in distal immature oocytes are fragmented, produce high levels of reactive oxygen species (ROS) and have high membrane potential, indicative of metabolic inactivity. In contrast, mitochondria in proximal mature oocytes are tubular with lower ROS levels and membrane potential, indicative of an active metabolic state required for aggregate mobilization before clearance. The sequence is that of V-type proton ATPase 16 kDa proteolipid subunit c 2 from Caenorhabditis elegans.